Consider the following 624-residue polypeptide: Actin-related protein 8 (624 aa).

Position 1 is an N-acetylmethionine (methionine 1). Residues 1 to 25 (MTQAEKGEAENGKEKGGEKEKEQRG) are compositionally biased toward basic and acidic residues. The interval 1–29 (MTQAEKGEAENGKEKGGEKEKEQRGVKRP) is disordered. 2 residues coordinate ATP: serine 55 and threonine 56. Position 132 is a phosphoserine (serine 132). Position 283 to 286 (283 to 286 (DVGD)) interacts with ATP. A Phosphoserine modification is found at serine 412. A disordered region spans residues 430 to 462 (SKQEQSAKATADRKSASKPIGFEGDLRGQSSDL).

The protein belongs to the actin family. ARP8 subfamily. As to quaternary structure, component of the chromatin remodeling INO80 complex; specifically part of a complex module associated with the DBINO domain of INO80. Exists as monomers and dimers, but the dimer is most probably the biologically relevant form required for stable interactions with histones that exploits the twofold symmetry of the nucleosome core.

The protein resides in the nucleus. Its subcellular location is the chromosome. Its function is as follows. Plays an important role in the functional organization of mitotic chromosomes. Exhibits low basal ATPase activity, and unable to polymerize. Proposed core component of the chromatin remodeling INO80 complex which is involved in transcriptional regulation, DNA replication and probably DNA repair. Required for the recruitment of INO80 (and probably the INO80 complex) to sites of DNA damage Strongly prefer nucleosomes and H3-H4 tetramers over H2A-H2B dimers, suggesting it may act as a nucleosome recognition module within the complex. The sequence is that of Actin-related protein 8 (ACTR8) from Bos taurus (Bovine).